Here is a 371-residue protein sequence, read N- to C-terminus: Putative glutamate--cysteine ligase 2 (371 aa).

It belongs to the glutamate--cysteine ligase type 2 family. YbdK subfamily.

It catalyses the reaction L-cysteine + L-glutamate + ATP = gamma-L-glutamyl-L-cysteine + ADP + phosphate + H(+). Functionally, ATP-dependent carboxylate-amine ligase which exhibits weak glutamate--cysteine ligase activity. This is Putative glutamate--cysteine ligase 2 from Cupriavidus necator (strain ATCC 17699 / DSM 428 / KCTC 22496 / NCIMB 10442 / H16 / Stanier 337) (Ralstonia eutropha).